The sequence spans 153 residues: Gastric inhibitory polypeptide (153 aa).

The N-terminal stretch at 1-21 (MVATKTFALLLLSLFLAVGLG) is a signal peptide. 2 propeptides span residues 22–50 (EKKE…PRGP) and 95–153 (EARA…LRSR). The disordered stretch occupies residues 102-125 (ASQANRKEEEAVEPQSSPAKNPSD).

It belongs to the glucagon family.

The protein resides in the secreted. In terms of biological role, potent stimulator of insulin secretion and relatively poor inhibitor of gastric acid secretion. The sequence is that of Gastric inhibitory polypeptide (GIP) from Homo sapiens (Human).